We begin with the raw amino-acid sequence, 115 residues long: Large ribosomal subunit protein bL20 (115 aa).

Belongs to the bacterial ribosomal protein bL20 family.

Functionally, binds directly to 23S ribosomal RNA and is necessary for the in vitro assembly process of the 50S ribosomal subunit. It is not involved in the protein synthesizing functions of that subunit. The protein is Large ribosomal subunit protein bL20 of Synechococcus sp. (strain CC9311).